Consider the following 282-residue polypeptide: Acyl-CoA-binding domain-containing protein 6 (282 aa).

Residues 1–34 (MATPFLPAGATTGDSGGELSSGDDSGDLESFQTP) are disordered. At serine 41 the chain carries Phosphoserine. The 86-residue stretch at 42-127 (LAELFEKAAA…VKKLDPGWNP (86 aa)) folds into the ACB domain. An acyl-CoA is bound by residues 69–73 (YARYK) and lysine 95. At serine 106 the chain carries Phosphoserine. Position 114 (tyrosine 114) interacts with an acyl-CoA. ANK repeat units lie at residues 191-220 (EGRA…GINC) and 224-253 (EGQT…DPTL).

As to quaternary structure, monomer.

It localises to the cytoplasm. Its subcellular location is the nucleus. Its function is as follows. Binds long-chain acyl-coenzyme A molecules with a strong preference for unsaturated C18:1-CoA, lower affinity for unsaturated C20:4-CoA, and very weak affinity for saturated C16:0-CoA. Does not bind fatty acids. Plays a role in protein N-myristoylation. This is Acyl-CoA-binding domain-containing protein 6 (Acbd6) from Rattus norvegicus (Rat).